The sequence spans 513 residues: ATP synthase subunit alpha (513 aa).

Position 169-176 (Gly169–Thr176) interacts with ATP.

Belongs to the ATPase alpha/beta chains family. In terms of assembly, F-type ATPases have 2 components, CF(1) - the catalytic core - and CF(0) - the membrane proton channel. CF(1) has five subunits: alpha(3), beta(3), gamma(1), delta(1), epsilon(1). CF(0) has three main subunits: a(1), b(2) and c(9-12). The alpha and beta chains form an alternating ring which encloses part of the gamma chain. CF(1) is attached to CF(0) by a central stalk formed by the gamma and epsilon chains, while a peripheral stalk is formed by the delta and b chains.

It is found in the cell inner membrane. It carries out the reaction ATP + H2O + 4 H(+)(in) = ADP + phosphate + 5 H(+)(out). Produces ATP from ADP in the presence of a proton gradient across the membrane. The alpha chain is a regulatory subunit. This is ATP synthase subunit alpha from Francisella tularensis subsp. novicida (strain U112).